A 328-amino-acid polypeptide reads, in one-letter code: Glycerol-3-phosphate dehydrogenase [NAD(P)+] (328 aa).

4 residues coordinate NADPH: Trp-15, Arg-35, Arg-36, and Lys-105. Residues Lys-105 and Gly-131 each contribute to the sn-glycerol 3-phosphate site. NADPH is bound at residue Ala-135. Residues Lys-186, Asp-239, Ser-249, Arg-250, and Asn-251 each contribute to the sn-glycerol 3-phosphate site. Lys-186 serves as the catalytic Proton acceptor. Arg-250 contacts NADPH. Val-270 and Glu-272 together coordinate NADPH.

The protein belongs to the NAD-dependent glycerol-3-phosphate dehydrogenase family.

The protein resides in the cytoplasm. It carries out the reaction sn-glycerol 3-phosphate + NAD(+) = dihydroxyacetone phosphate + NADH + H(+). It catalyses the reaction sn-glycerol 3-phosphate + NADP(+) = dihydroxyacetone phosphate + NADPH + H(+). Its pathway is membrane lipid metabolism; glycerophospholipid metabolism. In terms of biological role, catalyzes the reduction of the glycolytic intermediate dihydroxyacetone phosphate (DHAP) to sn-glycerol 3-phosphate (G3P), the key precursor for phospholipid synthesis. In Deinococcus radiodurans (strain ATCC 13939 / DSM 20539 / JCM 16871 / CCUG 27074 / LMG 4051 / NBRC 15346 / NCIMB 9279 / VKM B-1422 / R1), this protein is Glycerol-3-phosphate dehydrogenase [NAD(P)+].